A 548-amino-acid polypeptide reads, in one-letter code: Chaperonin GroEL 1 (548 aa).

Residues 30-33, lysine 51, 87-91, glycine 415, 479-481, and aspartate 495 each bind ATP; these read TLGP, DGTTT, and NAA.

This sequence belongs to the chaperonin (HSP60) family. In terms of assembly, forms a cylinder of 14 subunits composed of two heptameric rings stacked back-to-back. Interacts with the co-chaperonin GroES.

It is found in the cytoplasm. It carries out the reaction ATP + H2O + a folded polypeptide = ADP + phosphate + an unfolded polypeptide.. Its function is as follows. Together with its co-chaperonin GroES, plays an essential role in assisting protein folding. The GroEL-GroES system forms a nano-cage that allows encapsulation of the non-native substrate proteins and provides a physical environment optimized to promote and accelerate protein folding. This Vibrio harveyi (Beneckea harveyi) protein is Chaperonin GroEL 1.